We begin with the raw amino-acid sequence, 106 residues long: Glutaredoxin-1 (106 aa).

A2 carries the post-translational modification N-acetylalanine. The region spanning 3–106 (QAFVNSKIQP…TRLKQMGALQ (104 aa)) is the Glutaredoxin domain. The residue at position 9 (K9) is an N6-succinyllysine. 2 disulfides stabilise this stretch: C23–C26 and C79–C83.

This sequence belongs to the glutaredoxin family.

It is found in the cytoplasm. Its function is as follows. Has a glutathione-disulfide oxidoreductase activity in the presence of NADPH and glutathione reductase. Reduces low molecular weight disulfides and proteins. This is Glutaredoxin-1 (GLRX) from Bos taurus (Bovine).